A 295-amino-acid polypeptide reads, in one-letter code: Ribosomal protein L11 methyltransferase (295 aa).

Threonine 146, glycine 167, aspartate 189, and asparagine 231 together coordinate S-adenosyl-L-methionine.

The protein belongs to the methyltransferase superfamily. PrmA family.

Its subcellular location is the cytoplasm. The catalysed reaction is L-lysyl-[protein] + 3 S-adenosyl-L-methionine = N(6),N(6),N(6)-trimethyl-L-lysyl-[protein] + 3 S-adenosyl-L-homocysteine + 3 H(+). Functionally, methylates ribosomal protein L11. This is Ribosomal protein L11 methyltransferase from Vibrio campbellii (strain ATCC BAA-1116).